A 750-amino-acid polypeptide reads, in one-letter code: MDRIAQQYRNGKRDNNGNRMASSAISEKGHIQVNQTRTPGQMPVYRGETINLSNLPQNQIKPCKDLDDVNIRRNNSNRHSKILLLDLCAGPNTNSFLGNTNAKDITVLSLPLPSTLVKRSNYPFENLLKNYLGSDEKYIEFTKIIKDYDIFIFSDSFSRISSCLKTTFCLIEKFKKFICHFFPSPYLKFFLLEGSLNDSKAPSLGKNKKNCILPKLDLNLNVNLTSRSTLNLRINIPPPNDSNKIFLQSLKKDLIHYSPNSLQKFFQFNMPADLAPNDTILPNWLKFCSVKENEKVILKKLFNNFETLENFEMQRLEKCLKFKKKPLHQKQLSQKQRGPQSTDDSKLYSLTSLQRQYKSSLKSNIQKNQKLKLIIPKNNTSSSPSPLSSDDTIMSPINDYELTEGIQSFTKNRYSNILPYEHSRVKLPHSPKPPAVSEASTTETKTDKSYPMCPVDAKNHSCKPNDYINANYLKLTQINPDFKYIATQAPLPSTMDDFWKVITLNKVKVIISLNSDDELNLRKWDIYWNNLSYSNHTIKLQNTWENICNINGCVLRVFQVKKTAPQNDNISQDCDLPHNGDLTSITMAVSEPFIVYQLQYKNWLDSCGVDMNDIIKLHKVKNSLLFNPQSFITSLEKDVCKPDLIDDNNSELHLDTANSSPLLVHCSAGCGRTGVFVTLDFLLSILSPTTNHSNKIDVWNMTQDLIFIIVNELRKQRISMVQNLTQYIACYEALLNYFALQKQIKNALPC.

The tract at residues 1-20 (MDRIAQQYRNGKRDNNGNRM) is disordered. Position 258 is a phosphoserine (Ser-258). Disordered stretches follow at residues 327–348 (LHQK…SKLY) and 425–450 (VKLP…DKSY). Positions 330–348 (KQLSQKQRGPQSTDDSKLY) are enriched in polar residues. One can recognise a Tyrosine-protein phosphatase domain in the interval 383-737 (SPSPLSSDDT…IACYEALLNY (355 aa)). Ser-430 is modified (phosphoserine). The active-site Phosphocysteine intermediate is the Cys-666.

The protein belongs to the protein-tyrosine phosphatase family. Non-receptor class subfamily. In terms of assembly, interacts with HOG1.

The protein resides in the cytoplasm. The protein localises to the nucleus. The catalysed reaction is O-phospho-L-tyrosyl-[protein] + H2O = L-tyrosyl-[protein] + phosphate. Functionally, major phosphatase responsible with PTP3 for tyrosine dephosphorylation of MAP kinase HOG1 to inactivate its activity. May also be involved in the regulation of MAP kinase FUS3. May be implicated in the ubiquitin-mediated protein degradation. This is Tyrosine-protein phosphatase 2 (PTP2) from Saccharomyces cerevisiae (strain ATCC 204508 / S288c) (Baker's yeast).